The following is a 323-amino-acid chain: Thiamine-monophosphate kinase (323 aa).

Mg(2+)-binding residues include aspartate 30, serine 45, threonine 46, and aspartate 47. Histidine 54 provides a ligand contact to substrate. Aspartate 75 and aspartate 122 together coordinate Mg(2+). Residues 121 to 122 and arginine 146 contribute to the ATP site; that span reads GD. Aspartate 212 is a Mg(2+) binding site. Serine 214 contacts ATP. Aspartate 215 serves as a coordination point for Mg(2+). Residues glutamate 263 and phenylalanine 319 each coordinate substrate.

It belongs to the thiamine-monophosphate kinase family.

It catalyses the reaction thiamine phosphate + ATP = thiamine diphosphate + ADP. The protein operates within cofactor biosynthesis; thiamine diphosphate biosynthesis; thiamine diphosphate from thiamine phosphate: step 1/1. Its function is as follows. Catalyzes the ATP-dependent phosphorylation of thiamine-monophosphate (TMP) to form thiamine-pyrophosphate (TPP), the active form of vitamin B1. This is Thiamine-monophosphate kinase from Buchnera aphidicola subsp. Acyrthosiphon pisum (strain APS) (Acyrthosiphon pisum symbiotic bacterium).